Reading from the N-terminus, the 267-residue chain is Alkaline ceramidase 3 (267 aa).

The Cytoplasmic segment spans residues 1–33 (MAPAADREGYWGPTTSTLDWCEENYSVTWYIAE). Residues Asp19, Trp20, Glu22, Asn24, and Glu33 each coordinate Ca(2+). Residues 34–55 (FWNTVSNLIMIIPPMFGAVQSV) form a helical membrane-spanning segment. Residues 56–61 (RDGLEK) are Lumenal-facing. Residues 62 to 82 (RYIASYLALTVVGMGSWCFHM) traverse the membrane as a helical segment. His81 contributes to the Zn(2+) binding site. Residues 83–87 (TLKYE) are Cytoplasmic-facing. Residues 88 to 108 (MQLLDELPMIYSCCIFVYCMF) traverse the membrane as a helical segment. The Lumenal segment spans residues 109–118 (ECFKIKNSVN). A helical transmembrane segment spans residues 119–139 (YHLLFTLVLFSLIVTTVYLKV). Over 140-141 (KE) the chain is Cytoplasmic. Residues 142 to 162 (PIFHQVMYGMLVFTLVLRSIY) traverse the membrane as a helical segment. Residues 163–173 (IVTWVYPWLRG) lie on the Lumenal side of the membrane. Residues 174-194 (LGYTSLGIFLLGFLFWNIDNI) form a helical membrane-spanning segment. Topologically, residues 195-215 (FCESLRNFRKKVPPIIGITTQ) are cytoplasmic. The helical transmembrane segment at 216–236 (FHAWWHILTGLGSYLHILFSL) threads the bilayer. Positions 217 and 221 each coordinate Zn(2+). The Lumenal portion of the chain corresponds to 237-267 (YTRTLYLRYRPKVKFLFGIWPVILFEPLRKH).

It belongs to the alkaline ceramidase family. Zn(2+) serves as cofactor. As to expression, ubiquitously expressed. Highly expressed in placenta. Expressed in erythrocytes.

The protein resides in the endoplasmic reticulum membrane. Its subcellular location is the golgi apparatus membrane. It carries out the reaction an N-acyl-(4R)-4-hydroxysphinganine + H2O = (4R)-hydroxysphinganine + a fatty acid. It catalyses the reaction N-(5Z,8Z,11Z,14Z-eicosatetraenoyl)-sphing-4-enine + H2O = sphing-4-enine + (5Z,8Z,11Z,14Z)-eicosatetraenoate. The enzyme catalyses N-(5Z,8Z,11Z,14Z-eicosatetraenoyl)-sphinganine + H2O = sphinganine + (5Z,8Z,11Z,14Z)-eicosatetraenoate. The catalysed reaction is N-(5Z,8Z,11Z,14Z-eicosatetraenoyl)-(4R)-hydroxysphinganine + H2O = (4R)-hydroxysphinganine + (5Z,8Z,11Z,14Z)-eicosatetraenoate. It carries out the reaction N-(11Z-eicosenoyl)-sphing-4-enine + H2O = (11Z)-eicosenoate + sphing-4-enine. It catalyses the reaction N-(11Z-eicosenoyl)-sphinganine + H2O = (11Z)-eicosenoate + sphinganine. The enzyme catalyses N-(11Z-eicosenoyl)-(4R)-hydroxysphinganine + H2O = (11Z)-eicosenoate + (4R)-hydroxysphinganine. The catalysed reaction is N-(9Z-octadecenoyl)-sphing-4-enine + H2O = sphing-4-enine + (9Z)-octadecenoate. It carries out the reaction N-(9Z-octadecenoyl)-sphinganine + H2O = sphinganine + (9Z)-octadecenoate. It catalyses the reaction N-(9Z-octadecenoyl)-(4R)-hydroxysphinganine + H2O = (4R)-hydroxysphinganine + (9Z)-octadecenoate. The enzyme catalyses an N-acylsphing-4-enine + H2O = sphing-4-enine + a fatty acid. The catalysed reaction is an N-acylsphinganine + H2O = sphinganine + a fatty acid. Its pathway is lipid metabolism; sphingolipid metabolism. Its activity is regulated as follows. Activated by 5 mM Ca(2+) and inhibited by 5 mM Zn(2+). In terms of biological role, endoplasmic reticulum and Golgi ceramidase that catalyzes the hydrolysis of unsaturated long-chain C18:1-, C20:1- and C20:4-ceramides, dihydroceramides and phytoceramides into sphingoid bases like sphingosine and free fatty acids at alkaline pH. Ceramides, sphingosine, and its phosphorylated form sphingosine-1-phosphate are bioactive lipids that mediate cellular signaling pathways regulating several biological processes including cell proliferation, apoptosis and differentiation. Controls the generation of sphingosine in erythrocytes, and thereby sphingosine-1-phosphate in plasma. Through the regulation of ceramides and sphingosine-1-phosphate homeostasis in the brain may play a role in neurons survival and function. By regulating the levels of pro-inflammatory ceramides in immune cells and tissues, may modulate the inflammatory response. In Homo sapiens (Human), this protein is Alkaline ceramidase 3 (ACER3).